Consider the following 640-residue polypeptide: Threonine--tRNA ligase (640 aa).

The TGS domain occupies 1-61; the sequence is MPIITLPNGD…TEDATLQIIT (61 aa). The catalytic stretch occupies residues 242 to 533; sequence DHRKIGKALD…LIEHYAGFMP (292 aa). 3 residues coordinate Zn(2+): Cys-333, His-384, and His-510.

Belongs to the class-II aminoacyl-tRNA synthetase family. In terms of assembly, homodimer. It depends on Zn(2+) as a cofactor.

The protein resides in the cytoplasm. It carries out the reaction tRNA(Thr) + L-threonine + ATP = L-threonyl-tRNA(Thr) + AMP + diphosphate + H(+). Functionally, catalyzes the attachment of threonine to tRNA(Thr) in a two-step reaction: L-threonine is first activated by ATP to form Thr-AMP and then transferred to the acceptor end of tRNA(Thr). Also edits incorrectly charged L-seryl-tRNA(Thr). The polypeptide is Threonine--tRNA ligase (Acinetobacter baylyi (strain ATCC 33305 / BD413 / ADP1)).